Here is a 778-residue protein sequence, read N- to C-terminus: Gelsolin (778 aa).

The first 23 residues, 1-23 (MGKQGFGYIFLTIFCTMALKLNC), serve as a signal peptide directing secretion. Positions 49–172 (MVEHAEFSKA…YKAGGVASGF (124 aa)) are actin-severing. One copy of the Gelsolin-like 1 repeat lies at 72-154 (FDLVPVPKNL…VQGHESSTFL (83 aa)). Gly88, Asp89, Glu120, Asp132, Gly137, and Ala139 together coordinate Ca(2+). Residues 119–122 (DERG) form an actin-actin interfilament contact point region. 158-165 (KSGIKYKA) serves as a coordination point for a 1,2-diacyl-sn-glycero-3-phospho-(1D-myo-inositol-4,5-bisphosphate). Residue Val168 coordinates Ca(2+). 184 to 192 (RLLQVKGRR) provides a ligand contact to a 1,2-diacyl-sn-glycero-3-phospho-(1D-myo-inositol-4,5-bisphosphate). Residues 193-266 (TVRATEVPVS…SEEGAEREEM (74 aa)) form a Gelsolin-like 2 repeat. Residues Gly209 and Asp210 each coordinate Ca(2+). An intrachain disulfide couples Cys211 to Cys224. Residues Glu232, Asp282, Glu325, Asp326, Glu350, Gly467, Asp468, Glu498, Asp510, Gly515, Pro517, Thr547, Asn587, Asp588, Glu610, Asp692, Asp693, and Glu715 each coordinate Ca(2+). Gelsolin-like repeat units follow at residues 313 to 385 (DENP…TPLF) and 451 to 532 (SEKV…PHLM). The tract at residues 430-778 (AAQHGMEDDG…LQRAMADVDV (349 aa)) is actin-binding, Ca-sensitive. Gelsolin-like repeat units lie at residues 574–638 (AVEL…DNFW) and 677–752 (IEEV…PPTF).

Belongs to the villin/gelsolin family. As to quaternary structure, binds to actin and to fibronectin. As to expression, highly expressed in homogene cells of the basilar papilla. Also detected in subcutaneous layer of the skin.

It localises to the secreted. The protein resides in the cytoplasm. Its subcellular location is the cytoskeleton. In terms of biological role, calcium-regulated, actin-modulating protein that binds to the plus (or barbed) ends of actin monomers or filaments, preventing monomer exchange (end-blocking or capping). It can promote the assembly of monomers into filaments (nucleation) as well as sever filaments already formed. Plays a role in ciliogenesis. In Gallus gallus (Chicken), this protein is Gelsolin (GSN).